We begin with the raw amino-acid sequence, 329 residues long: 36 kDa antigen (329 aa).

A helical membrane pass occupies residues 11 to 31; the sequence is AILTGGGALLLGLIVLFYLAY.

The protein belongs to the membrane fusion protein (MFP) (TC 8.A.1) family.

It localises to the membrane. The sequence is that of 36 kDa antigen from Helicobacter pylori (strain ATCC 700392 / 26695) (Campylobacter pylori).